The following is a 25-amino-acid chain: Alpha-lytic protease (25 aa).

It belongs to the peptidase S1 family.

It carries out the reaction Preferential cleavage: Ala-|-Xaa, Val-|-Xaa in bacterial cell walls, elastin and other proteins.. This is Alpha-lytic protease from Achromobacter lyticus.